The chain runs to 711 residues: Quinolinate synthase, chloroplastic (711 aa).

Residues Met-1 to Arg-41 constitute a chloroplast transit peptide. Residues Pro-17–Ser-63 are disordered. Cys-114 acts as the Cysteine persulfide intermediate in catalysis. Iminosuccinate contacts are provided by His-263 and Ser-289. Position 343 (Cys-343) interacts with [4Fe-4S] cluster. Iminosuccinate contacts are provided by residues Tyr-372–Asn-374 and Ser-394. Cys-467 contacts [4Fe-4S] cluster. Residues His-493–Glu-495 and Thr-518 each bind iminosuccinate. Residue Cys-631 coordinates [4Fe-4S] cluster.

This sequence belongs to the quinolinate synthase family. Type 1 subfamily. Homodimer. [4Fe-4S] cluster is required as a cofactor.

The protein resides in the plastid. Its subcellular location is the chloroplast. It carries out the reaction iminosuccinate + dihydroxyacetone phosphate = quinolinate + phosphate + 2 H2O + H(+). Its pathway is cofactor biosynthesis; NAD(+) biosynthesis; quinolinate from iminoaspartate: step 1/1. In terms of biological role, catalyzes the condensation of iminoaspartate with dihydroxyacetone phosphate to form quinolinate. This is Quinolinate synthase, chloroplastic from Oryza sativa subsp. japonica (Rice).